The chain runs to 604 residues: Microtubule-associated protein 70-4 (604 aa).

The disordered stretch occupies residues 1–33 (MEERGFMSPSLAISASYREGGSKGMSRRRSMRP). Positions 49–351 (DPVRIELNRL…ADRAAKSEAQ (303 aa)) form a coiled coil. The segment at 233–470 (IIDKMHRQKV…PLNHKSSEGT (238 aa)) is required for targeting to microtubules. 2 disordered regions span residues 367–422 (LKGP…RSLT) and 434–495 (GTSR…NDSV). The segment covering 371 to 385 (TSSSSRGTSVGRSSS) has biased composition (low complexity). 2 stretches are compositionally biased toward polar residues: residues 401-422 (PKITSNGSLIKRTPSSQLRSLT) and 468-478 (EGTSRGESPSS). Residues 521–569 (LRDKDEAIEMLAKKVETLTKAMDVEAKKMRREVAVMGKEVAAMRVVDKG) adopt a coiled-coil conformation.

It belongs to the MAP70 family.

The protein localises to the cytoplasm. It is found in the cytoskeleton. Plant-specific protein that interact with microtubules. This is Microtubule-associated protein 70-4 (MAP70.4) from Arabidopsis thaliana (Mouse-ear cress).